We begin with the raw amino-acid sequence, 1026 residues long: P3N-PIPO polyprotein (1026 aa).

The Peptidase S30 domain maps to 165–308; it reads RMSEASLQLF…KEQSNEIVHY (144 aa). Catalysis depends on for P1 proteinase activity residues His-216, Asp-225, and Ser-259. The Involved in interaction with stylet and aphid transmission signature appears at 360–363; that stretch reads KITC. The Involved in virions binding and aphid transmission motif lies at 618–620; that stretch reads PTK. The Peptidase C6 domain occupies 644–766; that stretch reads MFIAKAGYCY…DSSMKTYLVG (123 aa). Active-site for helper component proteinase activity residues include Cys-652 and His-725.

Belongs to the potyviridae P3N-PIPO polyprotein family. Interacts (via PIPO domain) with host PCaP1 protein; this interaction may help to anchor the movement complex to the plasma membrane from which the complex could move to the plasmodesmata. Post-translationally, potyviral RNA is expressed as two polyproteins which undergo post-translational proteolytic processing. Genome polyprotein is processed by NIa-pro, P1 and HC-pro proteinases resulting in the production of at least ten individual proteins. P3N-PIPO is cleaved by P1 and HC-pro proteinases resulting in the production of three individual proteins. The P1 proteinase and the HC-pro cleave only their respective C-termini autocatalytically.

It localises to the host cell junction. It is found in the host plasmodesma. It catalyses the reaction Hydrolyzes a Gly-|-Gly bond at its own C-terminus, commonly in the sequence -Tyr-Xaa-Val-Gly-|-Gly, in the processing of the potyviral polyprotein.. In terms of biological role, required for aphid transmission and also has proteolytic activity. Only cleaves a Gly-Gly dipeptide at its own C-terminus. Interacts with virions and aphid stylets. Acts as a suppressor of RNA-mediated gene silencing, also known as post-transcriptional gene silencing (PTGS), a mechanism of plant viral defense that limits the accumulation of viral RNAs. May have RNA-binding activity. Functionally, allows efficient cell to cell propagation, by bypassing the host cell wall barrier. Transports viral genome to neighboring plant cells directly through plasmosdesmata, without any budding. In Prunus armeniaca (Apricot), this protein is P3N-PIPO polyprotein.